The following is a 322-amino-acid chain: Basic 30 kDa endochitinase (322 aa).

A signal peptide spans 1–22; sequence MRLSEFTTLFLLFSVLLLSASA. In terms of domain architecture, Chitin-binding type-1 spans 23–64; sequence EQCGSQAGGALCASGLCCSKFGWCGNTNEYCGPGNCQSQCPG. Intrachain disulfides connect cysteine 25–cysteine 40, cysteine 34–cysteine 46, cysteine 39–cysteine 53, and cysteine 58–cysteine 62. 4-hydroxyproline occurs at positions 66 and 68. Cystine bridges form between cysteine 93–cysteine 156, cysteine 168–cysteine 176, and cysteine 275–cysteine 307. Glutamate 138 functions as the Proton donor in the catalytic mechanism. A propeptide spans 316-322 (removed in mature form); that stretch reads GLLVDIM.

The protein belongs to the glycosyl hydrolase 19 family. Chitinase class I subfamily. In terms of processing, the 4-hydroxyproline residues are not glycosylated in this plant vacuolar protein.

It is found in the vacuole. Its subcellular location is the secreted. The protein localises to the cell wall. The enzyme catalyses Random endo-hydrolysis of N-acetyl-beta-D-glucosaminide (1-&gt;4)-beta-linkages in chitin and chitodextrins.. Functionally, defense against chitin-containing fungal pathogens. This is Basic 30 kDa endochitinase (CHI9) from Solanum lycopersicum (Tomato).